Consider the following 329-residue polypeptide: MYG1 protein (329 aa).

The protein belongs to the MYG1 family.

This chain is MYG1 protein, found in Dictyostelium discoideum (Social amoeba).